Reading from the N-terminus, the 214-residue chain is Pyridoxine/pyridoxamine 5'-phosphate oxidase (214 aa).

Residues 9 to 12 and K68 contribute to the substrate site; that span reads RRSY. FMN-binding positions include 63–68, 78–79, K85, and Q107; these read RVVLLK and YT. Substrate is bound by residues Y125, R129, and S133. Residues 142–143 and W187 contribute to the FMN site; that span reads QS. Residue 193–195 participates in substrate binding; sequence RLH. R197 is an FMN binding site.

The protein belongs to the pyridoxamine 5'-phosphate oxidase family. Homodimer. FMN is required as a cofactor.

It catalyses the reaction pyridoxamine 5'-phosphate + O2 + H2O = pyridoxal 5'-phosphate + H2O2 + NH4(+). It carries out the reaction pyridoxine 5'-phosphate + O2 = pyridoxal 5'-phosphate + H2O2. The protein operates within cofactor metabolism; pyridoxal 5'-phosphate salvage; pyridoxal 5'-phosphate from pyridoxamine 5'-phosphate: step 1/1. It participates in cofactor metabolism; pyridoxal 5'-phosphate salvage; pyridoxal 5'-phosphate from pyridoxine 5'-phosphate: step 1/1. In terms of biological role, catalyzes the oxidation of either pyridoxine 5'-phosphate (PNP) or pyridoxamine 5'-phosphate (PMP) into pyridoxal 5'-phosphate (PLP). The polypeptide is Pyridoxine/pyridoxamine 5'-phosphate oxidase (Christiangramia forsetii (strain DSM 17595 / CGMCC 1.15422 / KT0803) (Gramella forsetii)).